We begin with the raw amino-acid sequence, 599 residues long: Endoribonuclease ZC3H12A (599 aa).

The tract at residues 1–40 is disordered; that stretch reads MSGPCGEKPVLEASPTMSLWEFEDSHSRQGTPRPGQELAA. Positions 42 to 87 are ubiquitin association domain; that stretch reads EASALELQMKVDFFRKLGYSSTEIHSVLQKLGVQADTNTVLGELVK. Residues 81–150 are necessary for interaction with TANK; that stretch reads VLGELVKHGT…DGSNVAMSHG (70 aa). Positions 90 to 133 are disordered; sequence TATERERQTSPDPCPQLPLVPRGGGTPKAPNLEPPLPEEEKEGS. Serine 99 is subject to Phosphoserine. The RNase stretch occupies residues 112 to 297; that stretch reads GGGTPKAPNL…LDNFLRKKPL (186 aa). An RNase NYN domain is found at 135 to 290; sequence LRPVVIDGSN…LGRHGPSLDN (156 aa). Residues 214–220 are RNA binding; the sequence is RRVGGKR. Aspartate 226 serves as a coordination point for Mg(2+). The C3H1-type zinc-finger motif lies at 301 to 324; sequence HRKQPCPYGRKCTYGIKCRFFHPE. The tract at residues 301 to 457 is necessary for interaction with ZC3H12D; the sequence is HRKQPCPYGR…SELWGVRGGG (157 aa). The interval 343–420 is disordered; that stretch reads LSPPRAPSKD…SGSSFGPTDW (78 aa). A Phosphoserine modification is found at serine 344. The span at 358-375 shows a compositional bias: low complexity; that stretch reads PSPSSQSSSLLTESEQCS. Over residues 386–399 the composition is skewed to polar residues; it reads SPGSRQEGLTQTYA. Serine 438 and serine 442 each carry phosphoserine. Residues 522-546 are disordered; that stretch reads PPPTSVLQEPPVQSPGAGRSPWGRA.

The protein belongs to the ZC3H12 family. Oligomer. Found in a deubiquitination complex with TANK, USP10 and ZC3H12A; this complex inhibits genotoxic stress- or interleukin-1-beta-mediated NF-kappaB activation by promoting IKBKG or TRAF6 deubiquitination. Interacts with IKBKG; this interaction increases in response to DNA damage. Interacts with TANK; this interaction increases in response to DNA damage and serves as a bridge to anchor both TANK and USP10 into a deubiquitinating complex. Interacts with TRAF6; this interaction increases in response to DNA damage and is stimulated by TANK. Interacts with USP10; this interaction increases in response to DNA damage and serves as a bridge to anchor both TANK and USP10 into a deubiquitinating complex. Interacts with ZC3H12D. Interacts with TNRC6A. Interacts with IKBKB/IKKB. Interacts with IKBKB/IKKB. Interacts with BTRC; the interaction occurs when ZC3H12A is phosphorylated in a IKBKB/IKKB-dependent manner. Interacts with IRAK1; this interaction increases the interaction between ZC3H12A and IKBKB/IKKB. Interacts with UPF1; this interaction occurs in a mRNA translationally active- and termination-dependent manner and is essential for ZC3H12A-mediated degradation of target mRNAs. Associates with ribosomes. Interacts with ubiquitin. As to quaternary structure, (Microbial infection) Oligomerization is necessary for antiviral activity. Mg(2+) is required as a cofactor. Post-translationally, phosphorylated by IRAK1; phosphorylation is necessary for subsequent phosphorylation by the I-kappa-B-kinase (IKK) complex. Phosphorylated by I-kappa-B-kinase (IKK) subunits IKBKB/IKKB and CHUK/IKKA at Ser-438 and Ser-442; these phosphorylations promote ubiquitin proteasome-mediated degradation of ZC3H12A and hence facilitates rapid and robust production of IL-6 mRNA in response to toll-like receptor (TLR) or IL-1 receptor stimuli. In terms of processing, (Microbial infection) Rapidly degraded in activated T-cells in response to phorbol 13-acetate 12-myristate (PMA) during HIV-1 viral infection. Ubiquitinated; ubiquitination is induced in response to interleukin IL1 receptor stimuli in a IKBKB/IKKB and IRAK1-dependent manner, leading to proteasome-mediated degradation. Post-translationally, proteolytically cleaved between Arg-111 and Arg-214 by MALT1 in activated T-cells; cleavage at Arg-111 is critical for promoting ZC3H12A degradation in response to T-cell receptor (TCR) stimulation, and hence is necessary for prolonging the stability of a set of mRNAs controlling T-cell activation and Th17 cell differentiation. In terms of tissue distribution, expressed in heart, placenta, spleen, kidney, liver and lung. Expressed in leukocytes. Expressed in monocyte.

It localises to the nucleus. The protein localises to the cytoplasm. The protein resides in the P-body. It is found in the rough endoplasmic reticulum membrane. Its subcellular location is the cytoplasmic granule. Its function is as follows. Endoribonuclease involved in various biological functions such as cellular inflammatory response and immune homeostasis, glial differentiation of neuroprogenitor cells, cell death of cardiomyocytes, adipogenesis and angiogenesis. Functions as an endoribonuclease involved in mRNA decay. Modulates the inflammatory response by promoting the degradation of a set of translationally active cytokine-induced inflammation-related mRNAs, such as IL6 and IL12B, during the early phase of inflammation. Prevents aberrant T-cell-mediated immune reaction by degradation of multiple mRNAs controlling T-cell activation, such as those encoding cytokines (IL6 and IL2), cell surface receptors (ICOS, TNFRSF4 and TNFR2) and transcription factor (REL). Inhibits cooperatively with ZC3H12A the differentiation of helper T cells Th17 in lungs. They repress target mRNA encoding the Th17 cell-promoting factors IL6, ICOS, REL, IRF4, NFKBID and NFKBIZ. The cooperation requires RNA-binding by RC3H1 and the nuclease activity of ZC3H12A. Together with RC3H1, destabilizes TNFRSF4/OX40 mRNA by binding to the conserved stem loop structure in its 3'UTR. Self regulates by destabilizing its own mRNA. Cleaves mRNA harboring a stem-loop (SL), often located in their 3'-UTRs, during the early phase of inflammation in a helicase UPF1-dependent manner. Plays a role in the inhibition of microRNAs (miRNAs) biogenesis. Cleaves the terminal loop of a set of precursor miRNAs (pre-miRNAs) important for the regulation of the inflammatory response leading to their degradation, and thus preventing the biosynthesis of mature miRNAs. Also plays a role in promoting angiogenesis in response to inflammatory cytokines by inhibiting the production of antiangiogenic microRNAs via its anti-dicer RNase activity. Affects the overall ubiquitination of cellular proteins. Positively regulates deubiquitinase activity promoting the cleavage at 'Lys-48'- and 'Lys-63'-linked polyubiquitin chains on TNF receptor-associated factors (TRAFs), preventing JNK and NF-kappa-B signaling pathway activation, and hence negatively regulating macrophage-mediated inflammatory response and immune homeostasis. Also induces deubiquitination of the transcription factor HIF1A, probably leading to its stabilization and nuclear import, thereby positively regulating the expression of proangiogenic HIF1A-targeted genes. Involved in a TANK-dependent negative feedback response to attenuate NF-kappaB activation through the deubiquitination of IKBKG or TRAF6 in response to interleukin-1-beta (IL1B) stimulation or upon DNA damage. Prevents stress granule (SGs) formation and promotes macrophage apoptosis under stress conditions, including arsenite-induced oxidative stress, heat shock and energy deprivation. Plays a role in the regulation of macrophage polarization; promotes IL4-induced polarization of macrophages M1 into anti-inflammatory M2 state. May also act as a transcription factor that regulates the expression of multiple genes involved in inflammatory response, angiogenesis, adipogenesis and apoptosis. Functions as a positive regulator of glial differentiation of neuroprogenitor cells through an amyloid precursor protein (APP)-dependent signaling pathway. Attenuates septic myocardial contractile dysfunction in response to lipopolysaccharide (LPS) by reducing I-kappa-B-kinase (IKK)-mediated NF-kappa-B activation, and hence myocardial pro-inflammatory cytokine production. Functionally, (Microbial infection) Binds to Japanese encephalitis virus (JEV) and Dengue virus (DEN) RNAs. (Microbial infection) Exhibits antiviral activity against HIV-1 in lymphocytes by decreasing the abundance of HIV-1 viral RNA species. The polypeptide is Endoribonuclease ZC3H12A (Homo sapiens (Human)).